We begin with the raw amino-acid sequence, 445 residues long: Amino-acid acetyltransferase (445 aa).

The 140-residue stretch at 299–438 (EQVRQAQIDD…QGLYNYQRNS (140 aa)) folds into the N-acetyltransferase domain.

The protein belongs to the acetyltransferase family. ArgA subfamily.

It is found in the cytoplasm. It catalyses the reaction L-glutamate + acetyl-CoA = N-acetyl-L-glutamate + CoA + H(+). It participates in amino-acid biosynthesis; L-arginine biosynthesis; N(2)-acetyl-L-ornithine from L-glutamate: step 1/4. The chain is Amino-acid acetyltransferase from Vibrio atlanticus (strain LGP32) (Vibrio splendidus (strain Mel32)).